Reading from the N-terminus, the 246-residue chain is tRNA pseudouridine synthase A (246 aa).

Residue aspartate 52 is the Nucleophile of the active site. Residue tyrosine 111 participates in substrate binding.

This sequence belongs to the tRNA pseudouridine synthase TruA family. In terms of assembly, homodimer.

The catalysed reaction is uridine(38/39/40) in tRNA = pseudouridine(38/39/40) in tRNA. Formation of pseudouridine at positions 38, 39 and 40 in the anticodon stem and loop of transfer RNAs. This is tRNA pseudouridine synthase A from Rhodopseudomonas palustris (strain BisA53).